The primary structure comprises 379 residues: L-demethylnoviosyl transferase (379 aa).

Belongs to the glycosyltransferase 28 family.

It catalyses the reaction dTDP-4-O-demethyl-beta-L-noviose + novobiocic acid = desmethyldescarbamoylnovobiocin + dTDP + H(+). It participates in antibiotic biosynthesis; novobiocin biosynthesis. Its activity is regulated as follows. Inhibited by TDP-L-rhamnose, the sugar donor that most closely structurally resembles the natural substrate dTDP-beta-L-noviose. Functionally, catalyzes the transfer of L-noviose from dTDP-4-O-demethyl-beta-L-noviose to the phenolic oxygen of novobiocic acid, creating the full ABC ring system in the novobiocin biosynthesis pathway. Novobiocin is an aminocoumarin family antibiotic that targets bacterial DNA gyrases. Also shows activity with variant coumarin aglycones, suggesting it may be a promiscuous catalyst for noviosylation of a range of planar scaffolds. Does not show activity with TDP-L-rhamnose. This Streptomyces niveus (Streptomyces spheroides) protein is L-demethylnoviosyl transferase (novM).